The primary structure comprises 255 residues: Diphthine synthase (255 aa).

S-adenosyl-L-methionine contacts are provided by residues Leu-9, Asp-85, Val-88, 113-114 (SI), Leu-164, Ala-207, and His-232.

It belongs to the diphthine synthase family. As to quaternary structure, homodimer.

The enzyme catalyses 2-[(3S)-amino-3-carboxypropyl]-L-histidyl-[translation elongation factor 2] + 3 S-adenosyl-L-methionine = diphthine-[translation elongation factor 2] + 3 S-adenosyl-L-homocysteine + 3 H(+). The protein operates within protein modification; peptidyl-diphthamide biosynthesis. In terms of biological role, S-adenosyl-L-methionine-dependent methyltransferase that catalyzes the trimethylation of the amino group of the modified target histidine residue in translation elongation factor 2 (EF-2), to form an intermediate called diphthine. The three successive methylation reactions represent the second step of diphthamide biosynthesis. This chain is Diphthine synthase, found in Methanococcus maripaludis (strain C5 / ATCC BAA-1333).